We begin with the raw amino-acid sequence, 146 residues long: Hemoglobin subunit beta-1 (146 aa).

One can recognise a Globin domain in the interval 2-146; sequence VWTNEERSII…VVSALGKQYH (145 aa). His-63 and His-92 together coordinate heme b.

The protein belongs to the globin family. As to quaternary structure, hb1 is a heterotetramer of two alpha chains and two beta-1 chains. Red blood cells.

Functionally, involved in oxygen transport from gills to the various peripheral tissues. This Pseudaphritis urvillii (Congolli) protein is Hemoglobin subunit beta-1 (hbb1).